We begin with the raw amino-acid sequence, 326 residues long: Phospho-N-acetylmuramoyl-pentapeptide-transferase (326 aa).

10 helical membrane-spanning segments follow: residues 2-22 (ILAT…FPYF), 51-71 (VPPM…LLWA), 73-93 (LTPE…LGFI), 113-133 (ILIQ…YSAE), 143-163 (GVII…IVGS), 175-195 (GLAA…AYIT), 199-219 (MNIT…LWFN), 225-245 (IFMG…TSVL), 250-270 (MLFA…IIQI), and 305-325 (VIVM…ITFL).

Belongs to the glycosyltransferase 4 family. MraY subfamily. Requires Mg(2+) as cofactor.

The protein localises to the cell membrane. It carries out the reaction UDP-N-acetyl-alpha-D-muramoyl-L-alanyl-gamma-D-glutamyl-meso-2,6-diaminopimeloyl-D-alanyl-D-alanine + di-trans,octa-cis-undecaprenyl phosphate = di-trans,octa-cis-undecaprenyl diphospho-N-acetyl-alpha-D-muramoyl-L-alanyl-D-glutamyl-meso-2,6-diaminopimeloyl-D-alanyl-D-alanine + UMP. The protein operates within cell wall biogenesis; peptidoglycan biosynthesis. In terms of biological role, catalyzes the initial step of the lipid cycle reactions in the biosynthesis of the cell wall peptidoglycan: transfers peptidoglycan precursor phospho-MurNAc-pentapeptide from UDP-MurNAc-pentapeptide onto the lipid carrier undecaprenyl phosphate, yielding undecaprenyl-pyrophosphoryl-MurNAc-pentapeptide, known as lipid I. The sequence is that of Phospho-N-acetylmuramoyl-pentapeptide-transferase from Wolbachia pipientis wMel.